We begin with the raw amino-acid sequence, 478 residues long: 3-isopropylmalate dehydratase large subunit (478 aa).

Residues C347, C407, and C410 each contribute to the [4Fe-4S] cluster site.

The protein belongs to the aconitase/IPM isomerase family. LeuC type 1 subfamily. In terms of assembly, heterodimer of LeuC and LeuD. Requires [4Fe-4S] cluster as cofactor.

The catalysed reaction is (2R,3S)-3-isopropylmalate = (2S)-2-isopropylmalate. It functions in the pathway amino-acid biosynthesis; L-leucine biosynthesis; L-leucine from 3-methyl-2-oxobutanoate: step 2/4. Its function is as follows. Catalyzes the isomerization between 2-isopropylmalate and 3-isopropylmalate, via the formation of 2-isopropylmaleate. In Prochlorococcus marinus (strain MIT 9313), this protein is 3-isopropylmalate dehydratase large subunit.